We begin with the raw amino-acid sequence, 424 residues long: UDP-N-acetylglucosamine 1-carboxyvinyltransferase (424 aa).

Phosphoenolpyruvate is bound at residue 22–23; that stretch reads KN. Position 93 (arginine 93) interacts with UDP-N-acetyl-alpha-D-glucosamine. The active-site Proton donor is cysteine 117. Cysteine 117 bears the 2-(S-cysteinyl)pyruvic acid O-phosphothioketal mark. UDP-N-acetyl-alpha-D-glucosamine-binding positions include 122-126, 162-165, aspartate 307, and isoleucine 329; these read RPVDL and KVSV.

The protein belongs to the EPSP synthase family. MurA subfamily.

The protein resides in the cytoplasm. The enzyme catalyses phosphoenolpyruvate + UDP-N-acetyl-alpha-D-glucosamine = UDP-N-acetyl-3-O-(1-carboxyvinyl)-alpha-D-glucosamine + phosphate. It participates in cell wall biogenesis; peptidoglycan biosynthesis. In terms of biological role, cell wall formation. Adds enolpyruvyl to UDP-N-acetylglucosamine. The chain is UDP-N-acetylglucosamine 1-carboxyvinyltransferase from Histophilus somni (strain 129Pt) (Haemophilus somnus).